Reading from the N-terminus, the 1104-residue chain is Inhibitory regulator protein BUD2/CLA2 (1104 aa).

The residue at position 2 (Ser-2) is an N-acetylserine. In terms of domain architecture, C2 spans 316–444 (RSEYLSITGS…RYNKETRLPI (129 aa)). The Ras-GAP domain occupies 536–753 (AKIDGTVSRI…NDLLDYIDKM (218 aa)). Phosphoserine is present on Ser-854. Residues 1027–1104 (NPKSSNKTSV…FKKKKETGGS (78 aa)) are disordered. 2 stretches are compositionally biased toward polar residues: residues 1029–1043 (KSSN…SSEN) and 1052–1069 (LPNS…SPTK). Basic residues predominate over residues 1090-1104 (KLTRWFKKKKETGGS).

Functionally, stimulates the GTPase activity of BUD1/RSR1. Participates in the regulation of bud-site selection. This Saccharomyces cerevisiae (strain ATCC 204508 / S288c) (Baker's yeast) protein is Inhibitory regulator protein BUD2/CLA2 (BUD2).